The sequence spans 188 residues: ATP synthase subunit delta (188 aa).

The protein belongs to the ATPase delta chain family. As to quaternary structure, F-type ATPases have 2 components, F(1) - the catalytic core - and F(0) - the membrane proton channel. F(1) has five subunits: alpha(3), beta(3), gamma(1), delta(1), epsilon(1). F(0) has three main subunits: a(1), b(2) and c(10-14). The alpha and beta chains form an alternating ring which encloses part of the gamma chain. F(1) is attached to F(0) by a central stalk formed by the gamma and epsilon chains, while a peripheral stalk is formed by the delta and b chains.

Its subcellular location is the cell inner membrane. Functionally, f(1)F(0) ATP synthase produces ATP from ADP in the presence of a proton or sodium gradient. F-type ATPases consist of two structural domains, F(1) containing the extramembraneous catalytic core and F(0) containing the membrane proton channel, linked together by a central stalk and a peripheral stalk. During catalysis, ATP synthesis in the catalytic domain of F(1) is coupled via a rotary mechanism of the central stalk subunits to proton translocation. In terms of biological role, this protein is part of the stalk that links CF(0) to CF(1). It either transmits conformational changes from CF(0) to CF(1) or is implicated in proton conduction. This chain is ATP synthase subunit delta, found in Rhizobium rhizogenes (strain K84 / ATCC BAA-868) (Agrobacterium radiobacter).